We begin with the raw amino-acid sequence, 489 residues long: Occludin (489 aa).

Over Met1 to Arg51 the chain is Cytoplasmic. Positions Ser45–His248 constitute an MARVEL domain. Residues Ile52–Trp74 traverse the membrane as a helical segment. At Glu75–Arg112 the chain is on the extracellular side. A helical transmembrane segment spans residues Ala113–Leu137. The Cytoplasmic segment spans residues Ser138–Arg147. The chain crosses the membrane as a helical span at residues Phe148–Val172. At Gly173–Glu222 the chain is on the extracellular side. Cys196 and Cys216 are disulfide-bonded. The helical transmembrane segment at Ala223–Gln244 threads the bilayer. The Cytoplasmic portion of the chain corresponds to Lys245–Ser489. Ser280 is modified (phosphoserine). Residue Thr285 is modified to Phosphothreonine. At Ser300 the chain carries Phosphoserine. Positions Pro308–Asp382 are disordered. The segment covering Pro322–Pro332 has biased composition (pro residues). Residues Pro345–Pro354 show a composition bias toward basic residues. Phosphotyrosine is present on residues Tyr364 and Tyr368. Over residues Glu365–Glu377 the composition is skewed to polar residues. Thr369 and Thr370 each carry phosphothreonine; by PKC/PRKCH. Ser374 carries the post-translational modification Phosphoserine. In terms of domain architecture, OCEL spans Asp381 to Ser489. The stretch at Leu407–Leu434 forms a coiled coil. At Ser457 the chain carries Phosphoserine.

The protein belongs to the ELL/occludin family. Interacts with TJP1/ZO1. Interacts with VAPA. Interacts with CLDN1, CLDN6, CLDN9, CLDN11, CLDN12 and CLDN17. Interacts with PLSCR1. Interacts with LSR, ILDR1 and ILDR2. Interacts with TJP2/ZO2. Dephosphorylated by PTPRJ. In terms of tissue distribution, localized at tight junctions of both epithelial and endothelial cells.

It localises to the cell membrane. The protein resides in the cell junction. The protein localises to the tight junction. Its function is as follows. May play a role in the formation and regulation of the tight junction (TJ) paracellular permeability barrier. The chain is Occludin (OCLN) from Potorous tridactylus (Potoroo).